The following is a 158-amino-acid chain: Transcriptional regulator MraZ (158 aa).

2 SpoVT-AbrB domains span residues 7–57 (THQN…PTAA) and 86–129 (AYPV…EPAA). Residues 133-158 (RRAEARTRSRQLALPAQGRRQGGADA) are disordered.

Belongs to the MraZ family. As to quaternary structure, forms oligomers.

The protein resides in the cytoplasm. It localises to the nucleoid. In Gluconacetobacter diazotrophicus (strain ATCC 49037 / DSM 5601 / CCUG 37298 / CIP 103539 / LMG 7603 / PAl5), this protein is Transcriptional regulator MraZ.